A 73-amino-acid polypeptide reads, in one-letter code: Putative antitoxin VapB16 (73 aa).

The protein belongs to the UPF0330 family.

Functionally, possibly the antitoxin component of a type II toxin-antitoxin (TA) system. Its cognate toxin is VapC16 (Potential). This Archaeoglobus fulgidus (strain ATCC 49558 / DSM 4304 / JCM 9628 / NBRC 100126 / VC-16) protein is Putative antitoxin VapB16 (vapB16).